The sequence spans 118 residues: Thioredoxin H5 (118 aa).

N-acetylalanine is present on Ala2. The region spanning 2–113 (AGEGEVIACH…INEKLMKHGG (112 aa)) is the Thioredoxin domain. Catalysis depends on nucleophile residues Cys39 and Cys42. Cys39 and Cys42 are oxidised to a cystine.

Belongs to the thioredoxin family. Plant H-type subfamily. As to quaternary structure, interacts with MDH1.

The protein localises to the cytoplasm. Thiol-disulfide oxidoreductase involved in response to pathogens and oxidative stresses. Required for the response to victorin, a phytotoxin which induces programmed cell death in sensitive plants. Possesses insulin disulfide bonds reducing activity. This Arabidopsis thaliana (Mouse-ear cress) protein is Thioredoxin H5 (TRX5).